The sequence spans 256 residues: Imidazole glycerol phosphate synthase subunit HisF (256 aa).

Active-site residues include Asp-11 and Asp-130.

The protein belongs to the HisA/HisF family. In terms of assembly, heterodimer of HisH and HisF.

It is found in the cytoplasm. The enzyme catalyses 5-[(5-phospho-1-deoxy-D-ribulos-1-ylimino)methylamino]-1-(5-phospho-beta-D-ribosyl)imidazole-4-carboxamide + L-glutamine = D-erythro-1-(imidazol-4-yl)glycerol 3-phosphate + 5-amino-1-(5-phospho-beta-D-ribosyl)imidazole-4-carboxamide + L-glutamate + H(+). Its pathway is amino-acid biosynthesis; L-histidine biosynthesis; L-histidine from 5-phospho-alpha-D-ribose 1-diphosphate: step 5/9. Its function is as follows. IGPS catalyzes the conversion of PRFAR and glutamine to IGP, AICAR and glutamate. The HisF subunit catalyzes the cyclization activity that produces IGP and AICAR from PRFAR using the ammonia provided by the HisH subunit. In Prochlorococcus marinus (strain MIT 9312), this protein is Imidazole glycerol phosphate synthase subunit HisF.